Reading from the N-terminus, the 715-residue chain is Polyribonucleotide nucleotidyltransferase (715 aa).

2 residues coordinate Mg(2+): Asp-498 and Asp-504. The region spanning 565 to 625 (PKVCMMQIKP…ETVKKTVAFI (61 aa)) is the KH domain. Residues 635 to 709 (GTCYQASILR…RIDFLLLPKK (75 aa)) form the S1 motif domain.

Belongs to the polyribonucleotide nucleotidyltransferase family. The cofactor is Mg(2+).

The protein localises to the cytoplasm. It catalyses the reaction RNA(n+1) + phosphate = RNA(n) + a ribonucleoside 5'-diphosphate. Involved in mRNA degradation. Catalyzes the phosphorolysis of single-stranded polyribonucleotides processively in the 3'- to 5'-direction. The sequence is that of Polyribonucleotide nucleotidyltransferase from Aster yellows witches'-broom phytoplasma (strain AYWB).